Here is a 314-residue protein sequence, read N- to C-terminus: Olfactory receptor 1 (314 aa).

At 1 to 29 (MTERNQTVISQFLLLGLPIPPEHQHVFYA) the chain is on the extracellular side. The N-linked (GlcNAc...) asparagine glycan is linked to asparagine 5. The helical transmembrane segment at 30–50 (LFLSMYLTTVLGNLIIIILIL) threads the bilayer. Residues 51–59 (LDSHLHTPM) are Cytoplasmic-facing. A helical membrane pass occupies residues 60 to 81 (YLFLSNLSFSDLCFSSVTMPKL). The Extracellular segment spans residues 82 to 97 (LQNMQSQVPSIPYAGC). A disulfide bond links cysteine 97 and cysteine 179. The chain crosses the membrane as a helical span at residues 98–118 (LSQIYFFLFFGDLGNFLLVAM). The Cytoplasmic portion of the chain corresponds to 119–143 (AYDRYVAICFPLHYMSIMSPKLCVS). Residues 144 to 164 (LVVLSWVLTTFHAMLHTLLMA) form a helical membrane-spanning segment. Residues 165-196 (RLSFCEDNVIPHFFCDMSALLKLACSDTRVNE) lie on the Extracellular side of the membrane. The helical transmembrane segment at 197–217 (VVIFIVVSLFLVLPFALIIMS) threads the bilayer. Topologically, residues 218–240 (YVRIVSSILKVPSSQGIYKAFST) are cytoplasmic. A helical membrane pass occupies residues 241-261 (CGSHLSVVSLFYGTVIGLYLC). Topologically, residues 262–271 (PSSNNSTVKE) are extracellular. Residues asparagine 265 and asparagine 266 are each glycosylated (N-linked (GlcNAc...) asparagine). Residues 272–292 (TVMSLMYTVVTPMLNPFIYSL) form a helical membrane-spanning segment. Topologically, residues 293–314 (RNRDIKGAMERIFCKRKIQLNL) are cytoplasmic.

This sequence belongs to the G-protein coupled receptor 1 family. Olfactory epithelium.

The protein localises to the cell membrane. In terms of biological role, odorant receptor. Activated by a lily-derived aldehyde as well as other odorants. May signal through an inositol 1,4,5-trisphosphate (IP3) second messenger system. This Rattus norvegicus (Rat) protein is Olfactory receptor 1.